The sequence spans 689 residues: DNA topoisomerase 1 (689 aa).

The region spanning 3–113 (DNLVIVESPA…KENRVVFNEI (111 aa)) is the Toprim domain. Positions 9 and 82 each coordinate Mg(2+). Residues 129–557 (EMNLVDAQQA…FFSSFKQDVE (429 aa)) form the Topo IA-type catalytic domain. The tract at residues 163 to 168 (SAGRVQ) is interaction with DNA. Tyr-298 serves as the catalytic O-(5'-phospho-DNA)-tyrosine intermediate. The disordered stretch occupies residues 328 to 357 (SKRKASGKQGDQDAHEAIRPSSTMRTPDDM). 3 C4-type zinc fingers span residues 577–603 (CEVC…FPDC), 617–645 (CPKC…YPEC), and 658–681 (CPKC…CSNC).

Belongs to the type IA topoisomerase family. As to quaternary structure, monomer. Mg(2+) serves as cofactor.

The enzyme catalyses ATP-independent breakage of single-stranded DNA, followed by passage and rejoining.. Releases the supercoiling and torsional tension of DNA, which is introduced during the DNA replication and transcription, by transiently cleaving and rejoining one strand of the DNA duplex. Introduces a single-strand break via transesterification at a target site in duplex DNA. The scissile phosphodiester is attacked by the catalytic tyrosine of the enzyme, resulting in the formation of a DNA-(5'-phosphotyrosyl)-enzyme intermediate and the expulsion of a 3'-OH DNA strand. The free DNA strand then undergoes passage around the unbroken strand, thus removing DNA supercoils. Finally, in the religation step, the DNA 3'-OH attacks the covalent intermediate to expel the active-site tyrosine and restore the DNA phosphodiester backbone. In Staphylococcus aureus (strain bovine RF122 / ET3-1), this protein is DNA topoisomerase 1.